A 243-amino-acid polypeptide reads, in one-letter code: Methylthioribulose-1-phosphate dehydratase (243 aa).

A disordered region spans residues 1–22 (MCPADQTVATNNNDHLVQSEDP). Polar residues predominate over residues 7–16 (TVATNNNDHL). Cys-103 is a substrate binding site. His-120 and His-122 together coordinate Zn(2+). Glu-149 (proton donor/acceptor) is an active-site residue. Residue His-205 participates in Zn(2+) binding.

This sequence belongs to the aldolase class II family. MtnB subfamily. The cofactor is Zn(2+).

The protein localises to the cytoplasm. The catalysed reaction is 5-(methylsulfanyl)-D-ribulose 1-phosphate = 5-methylsulfanyl-2,3-dioxopentyl phosphate + H2O. It functions in the pathway amino-acid biosynthesis; L-methionine biosynthesis via salvage pathway; L-methionine from S-methyl-5-thio-alpha-D-ribose 1-phosphate: step 2/6. Catalyzes the dehydration of methylthioribulose-1-phosphate (MTRu-1-P) into 2,3-diketo-5-methylthiopentyl-1-phosphate (DK-MTP-1-P). This Penicillium rubens (strain ATCC 28089 / DSM 1075 / NRRL 1951 / Wisconsin 54-1255) (Penicillium chrysogenum) protein is Methylthioribulose-1-phosphate dehydratase.